Reading from the N-terminus, the 124-residue chain is MLSPDLPDSAWNTRLLCRVMLCLLGAGSVAAGVIQSPRHLIKEKRETATLKCYPIPRHDTVYWYQQGPGQDPQFLISFYEKMQSDKGSIPDRFSAQQFSDYHSELNMSSLELGDSALYFCASSL.

Positions 1–31 (MLSPDLPDSAWNTRLLCRVMLCLLGAGSVAA) are cleaved as a signal peptide. Residues 32 to 124 (GVIQSPRHLI…SALYFCASSL (93 aa)) enclose the Ig-like domain. C52 and C120 form a disulfide bridge. An N-linked (GlcNAc...) asparagine glycan is attached at N106.

As to quaternary structure, alpha-beta TR is a heterodimer composed of an alpha and beta chain; disulfide-linked. The alpha-beta TR is associated with the transmembrane signaling CD3 coreceptor proteins to form the TR-CD3 (TcR or TCR). The assembly of alpha-beta TR heterodimers with CD3 occurs in the endoplasmic reticulum where a single alpha-beta TR heterodimer associates with one CD3D-CD3E heterodimer, one CD3G-CD3E heterodimer and one CD247 homodimer forming a stable octameric structure. CD3D-CD3E and CD3G-CD3E heterodimers preferentially associate with TR alpha and TR beta chains, respectively. The association of the CD247 homodimer is the last step of TcR assembly in the endoplasmic reticulum and is required for transport to the cell surface.

Its subcellular location is the cell membrane. In terms of biological role, v region of the variable domain of T cell receptor (TR) beta chain that participates in the antigen recognition. Alpha-beta T cell receptors are antigen specific receptors which are essential to the immune response and are present on the cell surface of T lymphocytes. Recognize peptide-major histocompatibility (MH) (pMH) complexes that are displayed by antigen presenting cells (APC), a prerequisite for efficient T cell adaptive immunity against pathogens. Binding of alpha-beta TR to pMH complex initiates TR-CD3 clustering on the cell surface and intracellular activation of LCK that phosphorylates the ITAM motifs of CD3G, CD3D, CD3E and CD247 enabling the recruitment of ZAP70. In turn ZAP70 phosphorylates LAT, which recruits numerous signaling molecules to form the LAT signalosome. The LAT signalosome propagates signal branching to three major signaling pathways, the calcium, the mitogen-activated protein kinase (MAPK) kinase and the nuclear factor NF-kappa-B (NF-kB) pathways, leading to the mobilization of transcription factors that are critical for gene expression and essential for T cell growth and differentiation. The T cell repertoire is generated in the thymus, by V-(D)-J rearrangement. This repertoire is then shaped by intrathymic selection events to generate a peripheral T cell pool of self-MH restricted, non-autoaggressive T cells. Post-thymic interaction of alpha-beta TR with the pMH complexes shapes TR structural and functional avidity. The protein is T cell receptor beta variable 13 of Homo sapiens (Human).